We begin with the raw amino-acid sequence, 226 residues long: Phosphoglycolate phosphatase (226 aa).

The active-site Nucleophile is the aspartate 12. Positions 12, 14, and 177 each coordinate Mg(2+).

Belongs to the HAD-like hydrolase superfamily. CbbY/CbbZ/Gph/YieH family. Mg(2+) is required as a cofactor.

The enzyme catalyses 2-phosphoglycolate + H2O = glycolate + phosphate. It participates in organic acid metabolism; glycolate biosynthesis; glycolate from 2-phosphoglycolate: step 1/1. Functionally, specifically catalyzes the dephosphorylation of 2-phosphoglycolate. Is involved in the dissimilation of the intracellular 2-phosphoglycolate formed during the DNA repair of 3'-phosphoglycolate ends, a major class of DNA lesions induced by oxidative stress. This Colwellia psychrerythraea (strain 34H / ATCC BAA-681) (Vibrio psychroerythus) protein is Phosphoglycolate phosphatase.